The primary structure comprises 166 residues: Biotin carboxyl carrier protein of acetyl-CoA carboxylase (166 aa).

Over residues 61–70 the composition is skewed to polar residues; it reads STASEASSPA. The disordered stretch occupies residues 61–82; the sequence is STASEASSPASVKDVPVEEQPQ. Positions 90–166 constitute a Biotinyl-binding domain; that stretch reads GDIVESPLVG…EFGQGLVRIK (77 aa). At Lys132 the chain carries N6-biotinyllysine.

As to quaternary structure, homodimer.

The protein operates within lipid metabolism; fatty acid biosynthesis. In terms of biological role, this protein is a component of the acetyl coenzyme A carboxylase complex; first, biotin carboxylase catalyzes the carboxylation of the carrier protein and then the transcarboxylase transfers the carboxyl group to form malonyl-CoA. This is Biotin carboxyl carrier protein of acetyl-CoA carboxylase from Streptococcus pyogenes serotype M6 (strain ATCC BAA-946 / MGAS10394).